A 417-amino-acid polypeptide reads, in one-letter code: Dihydrolipoyllysine-residue succinyltransferase component of 2-oxoglutarate dehydrogenase complex (417 aa).

In terms of domain architecture, Lipoyl-binding spans 1-76; sequence MAEIKVPELA…QVGEIIGTIS (76 aa). Lys-42 carries the N6-lipoyllysine modification. The interval 75–191 is disordered; it reads ISEGAGESSA…SFDKPVEVQK (117 aa). Composition is skewed to basic and acidic residues over residues 89 to 103 and 152 to 163; these read EKTESKESVKEEKQA and RKQDVEAYEKPA. Residues 123 to 160 form the Peripheral subunit-binding (PSBD) domain; the sequence is IASPSARKLAREKGIDLSQVPTGDPLGRVRKQDVEAYE. A compositionally biased stretch (low complexity) spans 164-182; the sequence is SKPAPQQKQQPQAQKAQQS. Residues His-388 and Asp-392 contribute to the active site.

This sequence belongs to the 2-oxoacid dehydrogenase family. As to quaternary structure, forms a 24-polypeptide structural core with octahedral symmetry. Part of the 2-oxoglutarate dehydrogenase (OGDH) complex composed of E1 (2-oxoglutarate dehydrogenase), E2 (dihydrolipoamide succinyltransferase) and E3 (dihydrolipoamide dehydrogenase); the complex contains multiple copies of the three enzymatic components (E1, E2 and E3). It depends on (R)-lipoate as a cofactor.

It carries out the reaction N(6)-[(R)-dihydrolipoyl]-L-lysyl-[protein] + succinyl-CoA = N(6)-[(R)-S(8)-succinyldihydrolipoyl]-L-lysyl-[protein] + CoA. The protein operates within amino-acid degradation; L-lysine degradation via saccharopine pathway; glutaryl-CoA from L-lysine: step 6/6. In terms of biological role, E2 component of the 2-oxoglutarate dehydrogenase (OGDH) complex which catalyzes the second step in the conversion of 2-oxoglutarate to succinyl-CoA and CO(2). The sequence is that of Dihydrolipoyllysine-residue succinyltransferase component of 2-oxoglutarate dehydrogenase complex (odhB) from Bacillus subtilis (strain 168).